Consider the following 298-residue polypeptide: N-acetylmuramic acid 6-phosphate etherase (298 aa).

Residues 55–218 (IHAQVSGGGR…STGLMIKSGK (164 aa)) enclose the SIS domain. The active-site Proton donor is glutamate 83. Glutamate 114 is a catalytic residue.

The protein belongs to the GCKR-like family. MurNAc-6-P etherase subfamily. As to quaternary structure, homodimer.

The enzyme catalyses N-acetyl-D-muramate 6-phosphate + H2O = N-acetyl-D-glucosamine 6-phosphate + (R)-lactate. The protein operates within amino-sugar metabolism; 1,6-anhydro-N-acetylmuramate degradation. It functions in the pathway amino-sugar metabolism; N-acetylmuramate degradation. It participates in cell wall biogenesis; peptidoglycan recycling. Specifically catalyzes the cleavage of the D-lactyl ether substituent of MurNAc 6-phosphate, producing GlcNAc 6-phosphate and D-lactate. Together with AnmK, is also required for the utilization of anhydro-N-acetylmuramic acid (anhMurNAc) either imported from the medium or derived from its own cell wall murein, and thus plays a role in cell wall recycling. This is N-acetylmuramic acid 6-phosphate etherase from Escherichia coli O157:H7 (strain EC4115 / EHEC).